Consider the following 318-residue polypeptide: MSLQAITVTLNPAIDQTIQLDRLQPGAVHRASSVRNDAGGKGINVAACLADWGSQVAALGVLGVGNAGVFEALFRERGITDHCHRVAGDTRTNLKLVEAQVNETTDINLPGLQLGQAHLQGVADHLAPLLRAGLPVVLSGSLPAGLPEDSWAQLQAQASAAGARVLLDTSGAPLVAALAAAPVAMPYAVKPNRHELEAWTGHPLGDHAALTAAAHALIARGIQLVVISMGTEGALFVQRDQQLIARPPRLAQGSSVGAGDAMVAGLAAALLDDATELEQCARLATAFSMCRLESGDARRITPEGVRDAAAAVVIGAVP.

Residues 228–233 and 259–260 each bind ATP; these read SMGTEG and GD. The Proton acceptor role is filled by Asp260.

The protein belongs to the carbohydrate kinase PfkB family.

It carries out the reaction beta-D-fructose 1-phosphate + ATP = beta-D-fructose 1,6-bisphosphate + ADP + H(+). Catalyzes the ATP-dependent phosphorylation of fructose-l-phosphate to fructose-l,6-bisphosphate. The protein is 1-phosphofructokinase of Xanthomonas campestris pv. campestris (strain ATCC 33913 / DSM 3586 / NCPPB 528 / LMG 568 / P 25).